Consider the following 164-residue polypeptide: MVNSVIFFDITVDGKPLGRISIKQFADKIPKTAENFRALSTGEKGFRYKGSCFHRIIPGFMCQGGDFTHPNGTGDKSIYGEKFDDENLIRKHTGSGILSMANAGPNTNGSQFFICTAKTEWLDGKHVAFGKVKERVNIVEAMEHFGYRNSKTSKKITIADCGQF.

The region spanning 7–163 (FFDITVDGKP…KKITIADCGQ (157 aa)) is the PPIase cyclophilin-type domain.

Belongs to the cyclophilin-type PPIase family. PPIase A subfamily.

It is found in the cytoplasm. The catalysed reaction is [protein]-peptidylproline (omega=180) = [protein]-peptidylproline (omega=0). Functionally, PPIases accelerate the folding of proteins. It catalyzes the cis-trans isomerization of proline imidic peptide bonds in oligopeptides. The sequence is that of Peptidyl-prolyl cis-trans isomerase A-like 4G (PPIAL4G) from Homo sapiens (Human).